The sequence spans 630 residues: E3 ubiquitin-protein ligase TRIM41 (630 aa).

The segment at 20-61 (CAICLDYFTDPVSIGCGHNFCRVCVTQLWGGEDEEDRDELDR) adopts an RING-type; degenerate zinc-finger fold. Residues 51–75 (EDEEDRDELDREEEEEEVGEEEEVE) show a composition bias toward acidic residues. 2 disordered regions span residues 51 to 97 (EDEE…GDME) and 148 to 176 (EDED…PPPA). Thr-85 carries the phosphothreonine modification. A compositionally biased stretch (acidic residues) spans 148-166 (EDEDEEEEVLEEDEEEELD). Residues 222–263 (NEQGICPRHQEALKLFCEVDEEAICVVCRESRSHKQHSVVPL) form a B box-type zinc finger. Zn(2+) contacts are provided by Cys-227, His-230, Cys-249, and His-255. Lys-256 participates in a covalent cross-link: Glycyl lysine isopeptide (Lys-Gly) (interchain with G-Cter in SUMO2). Residues 281–374 (LRKHLEAVQK…AEAQERSQQG (94 aa)) adopt a coiled-coil conformation. Residues 413–630 (LTDAIVRKMS…SKGTRIKLCP (218 aa)) form the B30.2/SPRY domain. Ser-447 is subject to Phosphoserine. The tract at residues 503-535 (ARESTHHKEKVGSGGSSVSSGDASSSRHHHRRR) is disordered.

It belongs to the TRIM/RBCC family. Interacts with PRKCA. Interacts with NOD2. Interacts with TRIM17; this interaction prevents TRIM41 activity on ZSCAN2. Post-translationally, auto-ubiquitinated.

It is found in the cytoplasm. It localises to the nucleus. The catalysed reaction is S-ubiquitinyl-[E2 ubiquitin-conjugating enzyme]-L-cysteine + [acceptor protein]-L-lysine = [E2 ubiquitin-conjugating enzyme]-L-cysteine + N(6)-ubiquitinyl-[acceptor protein]-L-lysine.. The protein operates within protein modification; protein ubiquitination. In terms of biological role, E3 ligase that plays essential roles in innate antiviral response. Directly binds to influenza A virus or vesicular stomatitis virus nucleoproteins and targets them for ubiquitination and proteasomal degradation, thereby limiting viral infections. Activates the innate antiviral response by catalyzing monoubiquitination of CGAS, thereby activating CGAS. Also involved in innate antiviral response by mediating 'Lys-63'-linked polyubiquitylation of BCL10 which in turn hubs NEMO for activation of NF-kappa-B and IRF3 pathways. Catalyzes the ubiquitin-mediated degradation of other substrates including protein kinase C, ZSCAN21 or TOP3B suggesting additional roles besides its function in immune response. The polypeptide is E3 ubiquitin-protein ligase TRIM41 (Mus musculus (Mouse)).